The primary structure comprises 266 residues: MTTLSTLNKFKKDGTKFTCLTCYDAMFARMMEKAQIDTILIGDSLGMVVQGHDSTLPVTVDDMAYHTANVARSNKQALILADLPFMSYVTLPEAIANSRKLMQVGAHVIKIEGGSELCELVTMLAQAGTPTCVHLGLTPQSVNVFGGYKVQGRGDEAGQKLLDDAKAVVNAGAALLVLECVPAELAKAVTEAVAVPVIGIGAGADTDGQVLVMHDMLGMAHGRTPRFVHDFLTDERNTEHSIEGAFALYQQSVKEGSFPKEQHQFS.

Mg(2+) is bound by residues aspartate 43 and aspartate 82. 3-methyl-2-oxobutanoate contacts are provided by residues 43-44 (DS), aspartate 82, and lysine 110. A Mg(2+)-binding site is contributed by glutamate 112. The active-site Proton acceptor is the glutamate 179.

This sequence belongs to the PanB family. As to quaternary structure, homodecamer; pentamer of dimers. The cofactor is Mg(2+).

It localises to the cytoplasm. It carries out the reaction 3-methyl-2-oxobutanoate + (6R)-5,10-methylene-5,6,7,8-tetrahydrofolate + H2O = 2-dehydropantoate + (6S)-5,6,7,8-tetrahydrofolate. It functions in the pathway cofactor biosynthesis; (R)-pantothenate biosynthesis; (R)-pantoate from 3-methyl-2-oxobutanoate: step 1/2. Its function is as follows. Catalyzes the reversible reaction in which hydroxymethyl group from 5,10-methylenetetrahydrofolate is transferred onto alpha-ketoisovalerate to form ketopantoate. The sequence is that of 3-methyl-2-oxobutanoate hydroxymethyltransferase from Psychrobacter arcticus (strain DSM 17307 / VKM B-2377 / 273-4).